The following is a 436-amino-acid chain: Protein VHS2 (436 aa).

The tract at residues 1 to 34 (MDTSNHNQDHDSHVAAQRENDNNYMPPSPSMSES) is disordered. The span at 7-21 (NQDHDSHVAAQREND) shows a compositional bias: basic and acidic residues. 4 positions are modified to phosphoserine: Ser-53, Ser-61, Ser-102, and Ser-172. 4 disordered regions span residues 165–195 (RALG…DHGS), 211–266 (NNNN…HMNF), 282–360 (NNAN…EEDN), and 389–436 (NDNH…DTTK). A compositionally biased stretch (polar residues) spans 171–183 (RSLSSQSFDNETS). Low complexity-rich tracts occupy residues 211-226 (NNNN…STAN), 238-261 (SFSS…ASPP), and 282-299 (NNAN…AALS). 4 positions are modified to phosphoserine: Ser-299, Ser-301, Ser-303, and Ser-325. Positions 300 to 312 (RSPSNQQYLLKQQ) are enriched in polar residues. Positions 401-436 (TINNNIKNSPAFTNSNPSSKSNSNSTITSMNPDTTK) are enriched in low complexity.

To yeast MFL3.

The protein resides in the cytoplasm. In terms of biological role, can suppress the synthetic lethality of the hal3 sit4 double mutation when overexpressed, suggesting that it is involved in the G1-S transition. This is Protein VHS2 (VHS2) from Saccharomyces cerevisiae (strain ATCC 204508 / S288c) (Baker's yeast).